The chain runs to 366 residues: Phospho-N-acetylmuramoyl-pentapeptide-transferase (366 aa).

Helical transmembrane passes span 27 to 47 (AALF…INSL), 71 to 91 (TPTM…LLWA), 93 to 113 (LSNV…AIGF), 138 to 158 (FVIA…SGIA), 174 to 194 (FMIN…VGAG), 205 to 225 (GLAI…AYLA), 245 to 265 (LAVV…FNAP), 268 to 288 (AIFM…TVAV), 294 to 314 (IVMA…IIQV), and 343 to 363 (QVVI…LSTL).

Belongs to the glycosyltransferase 4 family. MraY subfamily. The cofactor is Mg(2+).

It localises to the cell inner membrane. The catalysed reaction is UDP-N-acetyl-alpha-D-muramoyl-L-alanyl-gamma-D-glutamyl-meso-2,6-diaminopimeloyl-D-alanyl-D-alanine + di-trans,octa-cis-undecaprenyl phosphate = di-trans,octa-cis-undecaprenyl diphospho-N-acetyl-alpha-D-muramoyl-L-alanyl-D-glutamyl-meso-2,6-diaminopimeloyl-D-alanyl-D-alanine + UMP. The protein operates within cell wall biogenesis; peptidoglycan biosynthesis. Catalyzes the initial step of the lipid cycle reactions in the biosynthesis of the cell wall peptidoglycan: transfers peptidoglycan precursor phospho-MurNAc-pentapeptide from UDP-MurNAc-pentapeptide onto the lipid carrier undecaprenyl phosphate, yielding undecaprenyl-pyrophosphoryl-MurNAc-pentapeptide, known as lipid I. This is Phospho-N-acetylmuramoyl-pentapeptide-transferase from Rhizobium johnstonii (strain DSM 114642 / LMG 32736 / 3841) (Rhizobium leguminosarum bv. viciae).